We begin with the raw amino-acid sequence, 284 residues long: Aquaporin NIP1-1 (284 aa).

The segment covering 1-12 (MAGGDNNSQTTN) has biased composition (polar residues). The interval 1 to 28 (MAGGDNNSQTTNGGSGHEQRAMEEGRKQ) is disordered. The segment covering 17 to 28 (HEQRAMEEGRKQ) has biased composition (basic and acidic residues). A run of 2 helical transmembrane segments spans residues 50–70 (IIAE…AVTI) and 78–98 (ITFP…VYAV). The NPA 1 motif lies at 107-109 (NPA). Helical transmembrane passes span 129-149 (AAAQ…MFGG), 166-186 (SLVL…GVAT), and 194-214 (LAGL…GPIS). The NPA 2 motif lies at 219–221 (NPA). A helical transmembrane segment spans residues 236–256 (IWVYIVGPVAGAVAGAWAYNI).

This sequence belongs to the MIP/aquaporin (TC 1.A.8) family. NIP (TC 1.A.8.12) subfamily. As to expression, expressed in leaves and at lower levels in roots and anthers.

The protein localises to the membrane. Its function is as follows. Aquaporins facilitate the transport of water and small neutral solutes across cell membranes. This chain is Aquaporin NIP1-1 (NIP1-1), found in Oryza sativa subsp. japonica (Rice).